Reading from the N-terminus, the 96-residue chain is DNA-directed RNA polymerase subunit Rpo11 (96 aa).

It belongs to the archaeal Rpo11/eukaryotic RPB11/RPC19 RNA polymerase subunit family. Part of the RNA polymerase complex.

The protein resides in the cytoplasm. It carries out the reaction RNA(n) + a ribonucleoside 5'-triphosphate = RNA(n+1) + diphosphate. Its function is as follows. DNA-dependent RNA polymerase (RNAP) catalyzes the transcription of DNA into RNA using the four ribonucleoside triphosphates as substrates. This is DNA-directed RNA polymerase subunit Rpo11 from Methanococcus maripaludis (strain C5 / ATCC BAA-1333).